The chain runs to 205 residues: Dephospho-CoA kinase (205 aa).

The DPCK domain maps to 4 to 204 (VVGLTGGIAS…QYYLTLATQQ (201 aa)). 12 to 17 (ASGKTT) serves as a coordination point for ATP.

It belongs to the CoaE family.

The protein resides in the cytoplasm. The enzyme catalyses 3'-dephospho-CoA + ATP = ADP + CoA + H(+). The protein operates within cofactor biosynthesis; coenzyme A biosynthesis; CoA from (R)-pantothenate: step 5/5. In terms of biological role, catalyzes the phosphorylation of the 3'-hydroxyl group of dephosphocoenzyme A to form coenzyme A. The chain is Dephospho-CoA kinase from Haemophilus ducreyi (strain 35000HP / ATCC 700724).